The sequence spans 517 residues: Protein MGF 505-2R (517 aa).

This sequence belongs to the asfivirus MGF 505 family.

Plays a role in virus cell tropism, and may be required for efficient virus replication in macrophages. This chain is Protein MGF 505-2R, found in Ornithodoros (relapsing fever ticks).